Consider the following 257-residue polypeptide: Imidazole glycerol phosphate synthase subunit HisF (257 aa).

Catalysis depends on residues aspartate 11 and aspartate 130.

The protein belongs to the HisA/HisF family. In terms of assembly, heterodimer of HisH and HisF.

It localises to the cytoplasm. The catalysed reaction is 5-[(5-phospho-1-deoxy-D-ribulos-1-ylimino)methylamino]-1-(5-phospho-beta-D-ribosyl)imidazole-4-carboxamide + L-glutamine = D-erythro-1-(imidazol-4-yl)glycerol 3-phosphate + 5-amino-1-(5-phospho-beta-D-ribosyl)imidazole-4-carboxamide + L-glutamate + H(+). It functions in the pathway amino-acid biosynthesis; L-histidine biosynthesis; L-histidine from 5-phospho-alpha-D-ribose 1-diphosphate: step 5/9. IGPS catalyzes the conversion of PRFAR and glutamine to IGP, AICAR and glutamate. The HisF subunit catalyzes the cyclization activity that produces IGP and AICAR from PRFAR using the ammonia provided by the HisH subunit. The chain is Imidazole glycerol phosphate synthase subunit HisF from Shewanella baltica (strain OS155 / ATCC BAA-1091).